Here is a 198-residue protein sequence, read N- to C-terminus: Superoxide dismutase [Fe] (198 aa).

Fe cation is bound by residues His-27, His-74, Asp-158, and His-162.

This sequence belongs to the iron/manganese superoxide dismutase family. As to quaternary structure, homodimer. Fe cation serves as cofactor.

The protein resides in the cytoplasm. It catalyses the reaction 2 superoxide + 2 H(+) = H2O2 + O2. Destroys superoxide anion radicals which are normally produced within the cells and which are toxic to biological systems. The polypeptide is Superoxide dismutase [Fe] (SODB) (Plasmodium falciparum (isolate 3D7)).